Consider the following 497-residue polypeptide: Probable cytosol aminopeptidase (497 aa).

Residues lysine 267 and aspartate 272 each coordinate Mn(2+). The active site involves lysine 279. Mn(2+) is bound by residues aspartate 290, aspartate 349, and glutamate 351. Arginine 353 is an active-site residue.

It belongs to the peptidase M17 family. Mn(2+) is required as a cofactor.

It is found in the cytoplasm. It catalyses the reaction Release of an N-terminal amino acid, Xaa-|-Yaa-, in which Xaa is preferably Leu, but may be other amino acids including Pro although not Arg or Lys, and Yaa may be Pro. Amino acid amides and methyl esters are also readily hydrolyzed, but rates on arylamides are exceedingly low.. The catalysed reaction is Release of an N-terminal amino acid, preferentially leucine, but not glutamic or aspartic acids.. Presumably involved in the processing and regular turnover of intracellular proteins. Catalyzes the removal of unsubstituted N-terminal amino acids from various peptides. In Nitrosomonas europaea (strain ATCC 19718 / CIP 103999 / KCTC 2705 / NBRC 14298), this protein is Probable cytosol aminopeptidase.